The sequence spans 333 residues: Adenosine deaminase (333 aa).

Residues histidine 12 and histidine 14 each contribute to the Zn(2+) site. Substrate is bound by residues histidine 14, aspartate 16, and glycine 170. Zn(2+) is bound at residue histidine 197. Glutamate 200 acts as the Proton donor in catalysis. A Zn(2+)-binding site is contributed by aspartate 278. Aspartate 279 serves as a coordination point for substrate.

It belongs to the metallo-dependent hydrolases superfamily. Adenosine and AMP deaminases family. Adenosine deaminase subfamily. Zn(2+) serves as cofactor.

It catalyses the reaction adenosine + H2O + H(+) = inosine + NH4(+). It carries out the reaction 2'-deoxyadenosine + H2O + H(+) = 2'-deoxyinosine + NH4(+). Catalyzes the hydrolytic deamination of adenosine and 2-deoxyadenosine. This is Adenosine deaminase from Proteus mirabilis (strain HI4320).